The following is a 672-amino-acid chain: MSKAFKLTSKFKPSGDQPQAIEKLVAGLEDGLAYQTLLGVTGSGKTFTIANAIEKVQRPTLILEPNKTLAAQFYAEMREFFPENAVEYFVSYYDYYQPEAYVPSSDTYIEKDASINDHIEQMRLSATKAITERHDTIIIATVSAIYGLGDPDSYLKMLLHLTRGDQIDQRKILQRLAELQYTRNDLELRRATYRVNGDIIDIYPADSEREAVRVELFDDEVENLSYFDPLTGEMLRRVPRITVYPKTHYVTPREKLLSTLDQIKIELKERLSQLEKANKLVERQRLEQRTKFDMEMILELGYCSGIENYSRYLSGRNEGEPPPTLIDYLPKDALLIIDESHVTIPQLGGMYRGDRARKETLVEYGFRLPSALDNRPLRFDEFEKLAPQTIFISATPGPYEEKQSDQVVELLVRPTGLIDPEIEVRPVATQVDDLLSEIKKRAAQNERVLVTTLTKRMAEDLTEYFTEHNVRVRYLHSDIDTVERVEIIRDLRLGVFDVLVGINLLREGLDIPEVSLVAILDADKEGFLRSERSLIQTMGRAARNVHGKAILYADRITDSMKRAMEEAERRRIAQSAYNEKHHITPKSIQKAVTEIIEGARTYTERGRFVNQAQLIAEEEAKYIAMTPKQLAKELRKLEEQMYHHARNLEFEEAAAVRDKIQHIRKGLLEVKE.

Residues 26 to 181 form the Helicase ATP-binding domain; that stretch reads AGLEDGLAYQ…ILQRLAELQY (156 aa). 39-46 is a binding site for ATP; that stretch reads GVTGSGKT. The Beta-hairpin signature appears at 92-115; the sequence is YYDYYQPEAYVPSSDTYIEKDASI. Positions 430 to 592 constitute a Helicase C-terminal domain; the sequence is QVDDLLSEIK…ITPKSIQKAV (163 aa). The 36-residue stretch at 631 to 666 folds into the UVR domain; that stretch reads AKELRKLEEQMYHHARNLEFEEAAAVRDKIQHIRKG.

This sequence belongs to the UvrB family. As to quaternary structure, forms a heterotetramer with UvrA during the search for lesions. Interacts with UvrC in an incision complex.

The protein localises to the cytoplasm. Its function is as follows. The UvrABC repair system catalyzes the recognition and processing of DNA lesions. A damage recognition complex composed of 2 UvrA and 2 UvrB subunits scans DNA for abnormalities. Upon binding of the UvrA(2)B(2) complex to a putative damaged site, the DNA wraps around one UvrB monomer. DNA wrap is dependent on ATP binding by UvrB and probably causes local melting of the DNA helix, facilitating insertion of UvrB beta-hairpin between the DNA strands. Then UvrB probes one DNA strand for the presence of a lesion. If a lesion is found the UvrA subunits dissociate and the UvrB-DNA preincision complex is formed. This complex is subsequently bound by UvrC and the second UvrB is released. If no lesion is found, the DNA wraps around the other UvrB subunit that will check the other stand for damage. In Coxiella burnetii (strain CbuG_Q212) (Coxiella burnetii (strain Q212)), this protein is UvrABC system protein B.